The sequence spans 286 residues: Diaminopimelate epimerase (286 aa).

Asparagine 13 and asparagine 66 together coordinate substrate. Cysteine 75 functions as the Proton donor in the catalytic mechanism. Residues glycine 76–asparagine 77, asparagine 165, asparagine 198, and glutamate 216–arginine 217 contribute to the substrate site. The active-site Proton acceptor is the cysteine 225. A substrate-binding site is contributed by glycine 226–threonine 227.

The protein belongs to the diaminopimelate epimerase family. Homodimer.

The protein localises to the cytoplasm. It carries out the reaction (2S,6S)-2,6-diaminopimelate = meso-2,6-diaminopimelate. It participates in amino-acid biosynthesis; L-lysine biosynthesis via DAP pathway; DL-2,6-diaminopimelate from LL-2,6-diaminopimelate: step 1/1. Its function is as follows. Catalyzes the stereoinversion of LL-2,6-diaminopimelate (L,L-DAP) to meso-diaminopimelate (meso-DAP), a precursor of L-lysine and an essential component of the bacterial peptidoglycan. In Oceanobacillus iheyensis (strain DSM 14371 / CIP 107618 / JCM 11309 / KCTC 3954 / HTE831), this protein is Diaminopimelate epimerase.